The chain runs to 145 residues: Transcriptional regulator MraZ (145 aa).

SpoVT-AbrB domains lie at 7-54 and 83-126; these read NATN…GPDL and GVFM…QPQA.

This sequence belongs to the MraZ family. As to quaternary structure, forms oligomers.

The protein localises to the cytoplasm. The protein resides in the nucleoid. The sequence is that of Transcriptional regulator MraZ from Rhizobium leguminosarum bv. trifolii (strain WSM2304).